Consider the following 246-residue polypeptide: Flavin-dependent thymidylate synthase (246 aa).

In terms of domain architecture, ThyX spans 17–241 (ITVELVKSAA…PLTHAAFNAN (225 aa)). Residues serine 69, 92–94 (RHR), and glutamate 101 contribute to the FAD site. DUMP-binding positions include 89–92 (EFMR), 101–105 (EESGR), and arginine 173. Positions 92–103 (RHRVGWSYNEES) match the ThyX motif motif. Residues 189-191 (NAR) and histidine 195 each bind FAD. A dUMP-binding site is contributed by arginine 200. Catalysis depends on arginine 200, which acts as the Involved in ionization of N3 of dUMP, leading to its activation.

Belongs to the thymidylate synthase ThyX family. In terms of assembly, homotetramer. The cofactor is FAD.

The catalysed reaction is dUMP + (6R)-5,10-methylene-5,6,7,8-tetrahydrofolate + NADPH + H(+) = dTMP + (6S)-5,6,7,8-tetrahydrofolate + NADP(+). Its pathway is pyrimidine metabolism; dTTP biosynthesis. Catalyzes the reductive methylation of 2'-deoxyuridine-5'-monophosphate (dUMP) to 2'-deoxythymidine-5'-monophosphate (dTMP) while utilizing 5,10-methylenetetrahydrofolate (mTHF) as the methyl donor, and NADPH and FADH(2) as the reductant. The chain is Flavin-dependent thymidylate synthase from Streptomyces coelicolor (strain ATCC BAA-471 / A3(2) / M145).